The following is a 130-amino-acid chain: Small ribosomal subunit protein uS9 (130 aa).

It belongs to the universal ribosomal protein uS9 family.

This Bordetella bronchiseptica (strain ATCC BAA-588 / NCTC 13252 / RB50) (Alcaligenes bronchisepticus) protein is Small ribosomal subunit protein uS9.